We begin with the raw amino-acid sequence, 470 residues long: Desmin (470 aa).

The interval 2–108 is head; sequence SQAYSSSQRV…QEFLTTRTNE (107 aa). S7 carries the post-translational modification Phosphoserine; by CDK1. Position 12 is a phosphoserine; by AURKB (S12). Omega-N-methylarginine is present on R16. T17 is modified (phosphothreonine; by AURKB and ROCK1). S28 bears the Phosphoserine; by CDK1 mark. S31 is modified (phosphoserine). Position 32 is a phosphoserine; by CDK1 (S32). Residue R37 is modified to Asymmetric dimethylarginine; alternate. At R37 the chain carries Omega-N-methylarginine; alternate. A Phosphoserine modification is found at S45. Position 58 is an ADP-ribosylarginine (R58). Position 60 is a phosphoserine; by AURKB (S60). R70 carries the post-translational modification Omega-N-methylarginine. T77 is modified (phosphothreonine; by ROCK1). S81 carries the phosphoserine modification. The IF rod domain occupies 108 to 416; the sequence is EKVELQELND…KLLEGEESRI (309 aa). A coil 1A region spans residues 109–141; it reads KVELQELNDRFANYIEKVRFLEQQNAALAAEVN. Positions 142-151 are linker 1; the sequence is RLKGREPTRV. The interval 152 to 252 is coil 1B; that stretch reads AEIYEEELRE…HEEEIRELQA (101 aa). Residues 253–268 form a linker 12 region; sequence QLQEQQVQVEMDMSKP. An interaction with NEB region spans residues 268-415; that stretch reads PDLTAALRDI…RKLLEGEESR (148 aa). Residues 269-287 are coil 2A; sequence DLTAALRDIRAQYETIAAK. The segment at 288–295 is linker 2; sequence NISEAEEW. Phosphoserine occurs at positions 290, 358, 361, and 424. Residues 296 to 412 are coil 2B; sequence YKSKVSDLTQ…ATYRKLLEGE (117 aa). The tract at residues 413 to 470 is tail; the sequence is ESRINLPIQTFSALNFRETSPEQRGSEVHTKKTVMIKTIETRDGEVVSEATQQQHEVL. The interaction with CRYAB stretch occupies residues 438–453; sequence SEVHTKKTVMIKTIET.

It belongs to the intermediate filament family. In terms of assembly, homomer. Interacts with DST. Interacts with MTM1. Interacts with EPPK1; interaction is dependent of higher-order structure of intermediate filament. Interacts with CRYAB. Interacts with NEB (via nebulin repeats 160-164). Interacts (via rod region) with NEBL (via nebulin repeats 1-5). Interacts with ASB2; the interaction targets DES for proteasomal degradation. Interacts with PKP1. Interacts with FLII. ADP-ribosylation prevents ability to form intermediate filaments. Post-translationally, phosphorylation at Ser-7, Ser-28 and Ser-32 by CDK1 and phosphorylation at Ser-60 by AURKB contribute to efficient separation of desmin intermediate filaments during mitosis. In terms of processing, ubiquitination by a SCF-like complex containing ASB2 leads to proteasomal degradation.

It is found in the cytoplasm. It localises to the myofibril. The protein resides in the sarcomere. The protein localises to the z line. Its subcellular location is the cell membrane. It is found in the sarcolemma. It localises to the nucleus. The protein resides in the cell tip. The protein localises to the nucleus envelope. In terms of biological role, muscle-specific type III intermediate filament essential for proper muscular structure and function. Plays a crucial role in maintaining the structure of sarcomeres, inter-connecting the Z-disks and forming the myofibrils, linking them not only to the sarcolemmal cytoskeleton, but also to the nucleus and mitochondria, thus providing strength for the muscle fiber during activity. In adult striated muscle they form a fibrous network connecting myofibrils to each other and to the plasma membrane from the periphery of the Z-line structures. May act as a sarcomeric microtubule-anchoring protein: specifically associates with detyrosinated tubulin-alpha chains, leading to buckled microtubules and mechanical resistance to contraction. Required for nuclear membrane integrity, via anchoring at the cell tip and nuclear envelope, resulting in maintenance of microtubule-derived intracellular mechanical forces. Contributes to the transcriptional regulation of the NKX2-5 gene in cardiac progenitor cells during a short period of cardiomyogenesis and in cardiac side population stem cells in the adult. Plays a role in maintaining an optimal conformation of nebulette (NEB) on heart muscle sarcomeres to bind and recruit cardiac alpha-actin. The sequence is that of Desmin (DES) from Bos taurus (Bovine).